The primary structure comprises 110 residues: Keratin, type II cytoskeletal 8 (110 aa).

Residues 1-12 form a head region; the sequence is MSTSGPRAFSSR. Positions 1–110 constitute an IF rod domain; the sequence is MSTSGPRAFS…LDIEIATYRK (110 aa). Residues serine 2, serine 4, serine 10, and serine 11 each carry the phosphoserine modification. Position 12 is an omega-N-methylarginine (arginine 12). The tract at residues 13–25 is coil 1A; the sequence is FASFIDKVRWSLL. The segment at 26–39 is linker 1; that stretch reads QQQKSNMDNMFESY. Residue lysine 29 forms a Glycyl lysine isopeptide (Lys-Gly) (interchain with G-Cter in SUMO2) linkage. The segment at 40-79 is coil 1B; that stretch reads INNLRDVDEAYMNKVELESRLEGLTDEINFLRQIHEEEIR. Residue lysine 53 is modified to N6-acetyllysine. A phosphoserine mark is found at serine 80 and serine 85. The segment at 80–86 is linker 12; that stretch reads SLDMDSI. The tract at residues 87 to 110 is coil 2; sequence IAEVRHGDDLRRLALDIEIATYRK. The tract at residues 88 to 99 is necessary for interaction with PNN; sequence AEVRHGDDLRRL. Lysine 110 participates in a covalent cross-link: Glycyl lysine isopeptide (Lys-Gly) (interchain with G-Cter in SUMO2).

Belongs to the intermediate filament family. As to quaternary structure, heterotetramer of two type I and two type II keratins. Forms a heterodimer with KRT18. Associates with KRT20. Interacts with PNN. When associated with KRT19, interacts with DMD. Interacts with TCHP. Interacts with APEX1. Interacts with GPER1. Interacts with EPPK1. Interacts with PKP1 and PKP2. Post-translationally, O-glycosylated. O-GlcNAcylation at multiple sites increases solubility, and decreases stability by inducing proteasomal degradation. O-glycosylated (O-GlcNAcylated), in a cell cycle-dependent manner.

It is found in the cytoplasm. Its subcellular location is the nucleus. It localises to the nucleoplasm. The protein resides in the nucleus matrix. Its function is as follows. Together with KRT19, helps to link the contractile apparatus to dystrophin at the costameres of striated muscle. In Mesocricetus auratus (Golden hamster), this protein is Keratin, type II cytoskeletal 8.